The sequence spans 124 residues: Small ribosomal subunit protein uS12 (124 aa).

The residue at position 89 (D89) is a 3-methylthioaspartic acid.

Belongs to the universal ribosomal protein uS12 family. As to quaternary structure, part of the 30S ribosomal subunit. Contacts proteins S8 and S17. May interact with IF1 in the 30S initiation complex.

In terms of biological role, with S4 and S5 plays an important role in translational accuracy. Its function is as follows. Interacts with and stabilizes bases of the 16S rRNA that are involved in tRNA selection in the A site and with the mRNA backbone. Located at the interface of the 30S and 50S subunits, it traverses the body of the 30S subunit contacting proteins on the other side and probably holding the rRNA structure together. The combined cluster of proteins S8, S12 and S17 appears to hold together the shoulder and platform of the 30S subunit. The protein is Small ribosomal subunit protein uS12 of Shewanella amazonensis (strain ATCC BAA-1098 / SB2B).